The following is a 509-amino-acid chain: Cytochrome P450 monooxygenase alt3 (509 aa).

A helical membrane pass occupies residues 25–45; sequence IITGIIVLPVLYVLLKVIYNL. Cys450 serves as a coordination point for heme.

This sequence belongs to the cytochrome P450 family. It depends on heme as a cofactor.

The protein resides in the membrane. It functions in the pathway secondary metabolite biosynthesis. In terms of biological role, cytochrome P450 monooxygenase; part of the gene cluster that mediates the biosynthesis of alternapyrone derivatives. Alternapyrone is a decaketide with octa-methylation from methionine on every C2 unit except the third unit. All the domains in the polyketide synthase alt5 are apparently involved in alternapyrone synthesis, that is, the 8 CMeT, 7 KR, 7 DH, and 4 ER reactions in the 9 KS-mediated condensation steps required for alternapyrone synthesis. the alternapyrone produced by alt5 might be intensively modified by cytochrome P450 monooxygenases alt1, alt2 and alt3 and FAD-dependent oxidoreductase alt4 present in the alt gene cluster. This is Cytochrome P450 monooxygenase alt3 from Alternaria solani.